A 241-amino-acid polypeptide reads, in one-letter code: uncharacterized protein (241 aa).

S-adenosyl-L-methionine contacts are provided by residues 78-80 (TSA), Gly-111, Ile-131, and 138-140 (SSL).

This sequence belongs to the class IV-like SAM-binding methyltransferase superfamily. RNA methyltransferase TrmH family.

This is an uncharacterized protein from Haemophilus influenzae (strain ATCC 51907 / DSM 11121 / KW20 / Rd).